The following is an 86-amino-acid chain: Probable weak neurotoxin NNAM1 (86 aa).

An N-terminal signal peptide occupies residues 1–21 (MKTLLLSLVVVTIVCLDLGYT). Disulfide bonds link cysteine 24–cysteine 45, cysteine 27–cysteine 32, cysteine 38–cysteine 63, cysteine 67–cysteine 78, and cysteine 79–cysteine 84.

It belongs to the three-finger toxin family. Ancestral subfamily. Orphan group II sub-subfamily. Expressed by the venom gland.

Its subcellular location is the secreted. In terms of biological role, binds with low affinity to muscular (alpha-1-beta-1-delta-epsilon/CHRNA1-CHRNB1-CHRND-CHRNE) and very low affinity to neuronal (alpha-7/CHRNA7) nicotinic acetylcholine receptor (nAChR). This Naja atra (Chinese cobra) protein is Probable weak neurotoxin NNAM1.